The following is a 114-amino-acid chain: Fluoride-specific ion channel FluC 2 (114 aa).

Transmembrane regions (helical) follow at residues 3 to 23 (YVII…ECWL), 31 to 51 (LMTA…WILA), 57 to 77 (GIEL…TFCM), and 92 to 112 (MIYL…GWNV). Na(+) is bound by residues glycine 67 and threonine 70.

Belongs to the fluoride channel Fluc/FEX (TC 1.A.43) family.

It is found in the cell membrane. The catalysed reaction is fluoride(in) = fluoride(out). Its activity is regulated as follows. Na(+) is not transported, but it plays an essential structural role and its presence is essential for fluoride channel function. Functionally, fluoride-specific ion channel. Important for reducing fluoride concentration in the cell, thus reducing its toxicity. The sequence is that of Fluoride-specific ion channel FluC 2 from Shouchella clausii (strain KSM-K16) (Alkalihalobacillus clausii).